The sequence spans 78 residues: MPKKVFCGTVTKAKCDKTVKVSVLQVYKDELYKKVIKKYKKYTAHDENNSCKEGDKVLIQEHKPISTTKKWVIVNSSH.

The protein belongs to the universal ribosomal protein uS17 family. In terms of assembly, part of the 30S ribosomal subunit.

In terms of biological role, one of the primary rRNA binding proteins, it binds specifically to the 5'-end of 16S ribosomal RNA. The sequence is that of Small ribosomal subunit protein uS17 from Wolbachia pipientis wMel.